An 87-amino-acid polypeptide reads, in one-letter code: ParB-like nuclease domain-containing protein YnaK (87 aa).

This is ParB-like nuclease domain-containing protein YnaK (ynaK) from Escherichia coli (strain K12).